Here is a 306-residue protein sequence, read N- to C-terminus: Ribonuclease H2 subunit B (306 aa).

Residues 232 to 285 (LPDLSSPTPEPPVKKRKVSEAPVEAEEDYTKFNSDSKNKKSNSKMTAAQKSLAK) form a disordered region. A compositionally biased stretch (basic and acidic residues) spans 259-269 (DYTKFNSDSKN).

Belongs to the RNase H2 subunit B family. As to quaternary structure, the RNase H2 complex is a heterotrimer composed of the catalytic subunit rnaseh2a and the non-catalytic subunits rnaseh2b and rnaseh2c.

Its subcellular location is the nucleus. Its function is as follows. Non catalytic subunit of RNase H2, an endonuclease that specifically degrades the RNA of RNA:DNA hybrids. Participates in DNA replication, possibly by mediating the removal of lagging-strand Okazaki fragment RNA primers during DNA replication. Mediates the excision of single ribonucleotides from DNA:RNA duplexes. The sequence is that of Ribonuclease H2 subunit B (rnaseh2b) from Xenopus tropicalis (Western clawed frog).